Reading from the N-terminus, the 865-residue chain is Aconitate hydratase B (865 aa).

Substrate contacts are provided by residues Arg191, 244–246 (SSR), 414–416 (QDT), and Ser498. [4Fe-4S] cluster contacts are provided by Cys710, Cys769, and Cys772. Positions 791 and 796 each coordinate substrate.

The protein belongs to the aconitase/IPM isomerase family. Monomer. AcnB can also form a homodimer. The monomer-homodimer transition is dependent on iron availability and the carboxymethylation of C-273 inhibits the dimer formation. The cofactor is [4Fe-4S] cluster.

The catalysed reaction is citrate = D-threo-isocitrate. It catalyses the reaction (2S,3R)-3-hydroxybutane-1,2,3-tricarboxylate = 2-methyl-cis-aconitate + H2O. It functions in the pathway organic acid metabolism; propanoate degradation. Its pathway is carbohydrate metabolism; tricarboxylic acid cycle; isocitrate from oxaloacetate: step 2/2. Involved in the catabolism of short chain fatty acids (SCFA) via the tricarboxylic acid (TCA)(acetyl degradation route) and the 2-methylcitrate cycle I (propionate degradation route). Catalyzes the reversible isomerization of citrate to isocitrate via cis-aconitate. Also catalyzes the hydration of 2-methyl-cis-aconitate to yield (2R,3S)-2-methylisocitrate. The apo form of AcnB functions as a RNA-binding regulatory protein. During oxidative stress inactive AcnB apo-enzyme without iron sulfur clusters binds the acnB mRNA 3' UTRs (untranslated regions), stabilizes acnB mRNA and increases AcnB synthesis, thus mediating a post-transcriptional positive autoregulatory switch. AcnB also decreases the stability of the sodA transcript. The chain is Aconitate hydratase B from Escherichia coli (strain K12).